The primary structure comprises 951 residues: Valine--tRNA ligase (951 aa).

The short motif at 42–52 (PNVTGSLHMGH) is the 'HIGH' region element. Residues 554 to 558 (KMSKS) carry the 'KMSKS' region motif. Residue Lys557 participates in ATP binding. Positions 882–951 (LIDKDAELAR…EEQKATIAAL (70 aa)) form a coiled coil.

It belongs to the class-I aminoacyl-tRNA synthetase family. ValS type 1 subfamily. Monomer.

The protein localises to the cytoplasm. It catalyses the reaction tRNA(Val) + L-valine + ATP = L-valyl-tRNA(Val) + AMP + diphosphate. In terms of biological role, catalyzes the attachment of valine to tRNA(Val). As ValRS can inadvertently accommodate and process structurally similar amino acids such as threonine, to avoid such errors, it has a 'posttransfer' editing activity that hydrolyzes mischarged Thr-tRNA(Val) in a tRNA-dependent manner. This is Valine--tRNA ligase from Vibrio vulnificus (strain CMCP6).